A 422-amino-acid chain; its full sequence is Phagosome assembly factor 1 (422 aa).

The protein belongs to the PHAF1 family. Interacts with BCAS3; the interaction is requrired for the association with the phagophore.

It localises to the cytoplasm. The protein resides in the preautophagosomal structure. In terms of biological role, plays a regulatory role in autophagic activity. In complex with BCAS3, associates with the autophagosome formation site during both non-selective and selective autophagy. This is Phagosome assembly factor 1 from Mus musculus (Mouse).